The primary structure comprises 357 residues: U3 small nucleolar ribonucleoprotein protein LCP5 (357 aa).

S2 carries the post-translational modification N-acetylserine. Disordered regions lie at residues 146-211 (STLV…YKPP) and 301-357 (NKAE…QRRL). The segment covering 155 to 166 (DDSEDDESSEDE) has biased composition (acidic residues). Positions 171–183 (PNTSGIINTNKKS) are enriched in polar residues. 2 stretches are compositionally biased toward basic and acidic residues: residues 187–196 (RVEETAKQEN) and 348–357 (SAWDRAQRRL).

The protein resides in the nucleus. It is found in the nucleolus. Its function is as follows. Component of the U3 small nucleolar ribonucleoprotein. Required for the early cleavages at sites A0, A1 and A2 of the pre-ribosomal RNA. Participates in ribosome biogenesis. The chain is U3 small nucleolar ribonucleoprotein protein LCP5 (LCP5) from Saccharomyces cerevisiae (strain ATCC 204508 / S288c) (Baker's yeast).